Reading from the N-terminus, the 385-residue chain is 1-deoxy-D-xylulose 5-phosphate reductoisomerase (385 aa).

The NADPH site is built by threonine 13, glycine 14, serine 15, isoleucine 16, asparagine 40, and asparagine 122. Lysine 123 is a binding site for 1-deoxy-D-xylulose 5-phosphate. Glutamate 124 lines the NADPH pocket. Aspartate 148 is a binding site for Mn(2+). 1-deoxy-D-xylulose 5-phosphate is bound by residues serine 149, glutamate 150, serine 177, and histidine 200. Glutamate 150 contacts Mn(2+). Position 206 (glycine 206) interacts with NADPH. The 1-deoxy-D-xylulose 5-phosphate site is built by serine 213, asparagine 218, lysine 219, and glutamate 222. Residue glutamate 222 participates in Mn(2+) binding.

This sequence belongs to the DXR family. Mg(2+) is required as a cofactor. The cofactor is Mn(2+).

It catalyses the reaction 2-C-methyl-D-erythritol 4-phosphate + NADP(+) = 1-deoxy-D-xylulose 5-phosphate + NADPH + H(+). It participates in isoprenoid biosynthesis; isopentenyl diphosphate biosynthesis via DXP pathway; isopentenyl diphosphate from 1-deoxy-D-xylulose 5-phosphate: step 1/6. Its function is as follows. Catalyzes the NADPH-dependent rearrangement and reduction of 1-deoxy-D-xylulose-5-phosphate (DXP) to 2-C-methyl-D-erythritol 4-phosphate (MEP). The chain is 1-deoxy-D-xylulose 5-phosphate reductoisomerase from Francisella tularensis subsp. tularensis (strain WY96-3418).